The sequence spans 160 residues: Arginine repressor (160 aa).

Belongs to the ArgR family.

The protein localises to the cytoplasm. The protein operates within amino-acid biosynthesis; L-arginine biosynthesis [regulation]. Its function is as follows. Regulates arginine biosynthesis genes. This Anaeromyxobacter dehalogenans (strain 2CP-1 / ATCC BAA-258) protein is Arginine repressor.